The sequence spans 591 residues: V-type ATP synthase alpha chain (591 aa).

232–239 (GPFGAGKT) provides a ligand contact to ATP.

It belongs to the ATPase alpha/beta chains family.

It carries out the reaction ATP + H2O + 4 H(+)(in) = ADP + phosphate + 5 H(+)(out). Produces ATP from ADP in the presence of a proton gradient across the membrane. The V-type alpha chain is a catalytic subunit. The polypeptide is V-type ATP synthase alpha chain (Clostridium perfringens (strain SM101 / Type A)).